Consider the following 127-residue polypeptide: Large ribosomal subunit protein bL17 (127 aa).

The protein belongs to the bacterial ribosomal protein bL17 family. In terms of assembly, part of the 50S ribosomal subunit. Contacts protein L32.

The protein is Large ribosomal subunit protein bL17 of Lactobacillus johnsonii (strain CNCM I-12250 / La1 / NCC 533).